The sequence spans 423 residues: AIELNQIWDFPIKEFHPFPRALMGVGAHDIIGVEAKNLGFKRTLLMTTGLRGSGIIEELVGKIEYQGVEVVLYDKVESNPKDYNVMEAAALYQKEKCDSIISIGGGSSHDAAKGARVVIAHDGRNINEFEGFAKSTNKENPPHIAVSTTAGTGSETSWAYVITDTSDMNNPHKWVGFDEATIVTLAIDDPLLYYTCPQHFTAYCGFDVLAHGSEPFVSRLDFAPSLGNAIYSVELVAKNLREAVFEPRNLKAREGMMNAQYIAGQAFNSGGLGIVHSISHAVSAFFDSHHGLNNAIALPRVWEYNLPSRYERYAQLAGALGVDTRNLTTVQAADAAVEAAIRLAKDVGIPDNFGQVRTDSYAKNQMNTKKYEGRGDVIKGDEKTVRAISEHIQDDWCTPGNPREVTVESMIPVVDHAINKSYF.

The protein belongs to the iron-containing alcohol dehydrogenase family. In terms of assembly, homodecamer. Mg(2+) serves as cofactor. Requires Zn(2+) as cofactor. The cofactor is NADPH.

The catalysed reaction is methanol + A = formaldehyde + AH2. Functionally, catalyzes the oxidation of methanol to yield formaldehyde. While the in vivo electron acceptor is not known, N,N-dimethyl-4-nitrosoaniline (NDMA) can serve this function in vitro and is reduced to 4-(hydroxylamino)-N,N-dimethylaniline. In Rhodococcus erythropolis (Arthrobacter picolinophilus), this protein is Methanol:N,N-dimethyl-4-nitrosoaniline oxidoreductase (thcE).